The primary structure comprises 282 residues: Bis(5'-nucleosyl)-tetraphosphatase, symmetrical (282 aa).

It belongs to the Ap4A hydrolase family.

The enzyme catalyses P(1),P(4)-bis(5'-adenosyl) tetraphosphate + H2O = 2 ADP + 2 H(+). In terms of biological role, hydrolyzes diadenosine 5',5'''-P1,P4-tetraphosphate to yield ADP. This chain is Bis(5'-nucleosyl)-tetraphosphatase, symmetrical, found in Escherichia coli O81 (strain ED1a).